A 541-amino-acid chain; its full sequence is Chaperonin GroEL (541 aa).

Residues 29 to 32 (TLGP), 86 to 90 (DGTTT), Gly413, and Asp495 contribute to the ATP site.

The protein belongs to the chaperonin (HSP60) family. In terms of assembly, forms a cylinder of 14 subunits composed of two heptameric rings stacked back-to-back. Interacts with the co-chaperonin GroES.

It localises to the cytoplasm. The enzyme catalyses ATP + H2O + a folded polypeptide = ADP + phosphate + an unfolded polypeptide.. Together with its co-chaperonin GroES, plays an essential role in assisting protein folding. The GroEL-GroES system forms a nano-cage that allows encapsulation of the non-native substrate proteins and provides a physical environment optimized to promote and accelerate protein folding. This Thermoanaerobacter pseudethanolicus (strain ATCC 33223 / 39E) (Clostridium thermohydrosulfuricum) protein is Chaperonin GroEL.